The chain runs to 259 residues: Flap endonuclease Xni (259 aa).

Position 109 (D109) interacts with Mg(2+). The 5'-3' exonuclease domain maps to 165 to 255 (VKPQQLSDYW…FNLQDLRFTA (91 aa)). K(+)-binding residues include L176, I187, and I190. The interaction with DNA stretch occupies residues 189-194 (GIGPKA).

It belongs to the Xni family. The cofactor is Mg(2+). It depends on K(+) as a cofactor.

Functionally, has flap endonuclease activity. During DNA replication, flap endonucleases cleave the 5'-overhanging flap structure that is generated by displacement synthesis when DNA polymerase encounters the 5'-end of a downstream Okazaki fragment. The sequence is that of Flap endonuclease Xni from Vibrio vulnificus (strain CMCP6).